Consider the following 266-residue polypeptide: RNA-binding protein 7 (266 aa).

N-acetylglycine is present on glycine 2. The region spanning 10–87 (RTLFVGNLET…RPIKIQFRSG (78 aa)) is the RRM domain. 2 ZCCHC8 binding regions span residues 25-35 (LLFELFHQAGP) and 59-76 (HEVSVPYAMNLLNGIKLY). Over residues 90–115 (HAPQDVSLSYPQHHVGNSSPTSTSPS) the composition is skewed to polar residues. Positions 90 to 118 (HAPQDVSLSYPQHHVGNSSPTSTSPSRYE) are disordered. Residues serine 136 and serine 137 each carry the phosphoserine modification. An Omega-N-methylarginine modification is found at arginine 152. The interval 162 to 266 (SSPLDQSGFS…RDGKWRSSRH (105 aa)) is disordered. Positions 173–188 (SVQSHSHSFNQSSSSQ) are enriched in low complexity. Position 204 is a phosphoserine (serine 204). Positions 209–266 (ADRHYSREQRYTDHGSDHHYRGKRDDFFYEDRNHDDWSHDYDNRRDSSRDGKWRSSRH) are enriched in basic and acidic residues.

In terms of assembly, component of the nuclear exosome targeting (NEXT) complex composed of MTREX, ZCCHC8, and RBM7 that directs a subset of non-coding short-lived RNAs for exosomal degradation. Interacts with ZCCHC8 and SF3B2/SAP145. Binds to MTREX through ZCCHC8. Interacts with YWHAE and YWHAZ; these interactions are stress-dependent and RBM7 phosphorylation dependent; release RNA from the NEXT complex and may affect RNA targeting to the nuclear RNA exosomome for degradation. Interacts with MEPCE and LARP7, the core subunits of 7SK snRNP; upon genotoxic stress this interaction is enhanced, triggering the release of inactive P-TEFb complex from the core and P-TEFb complex activation. Post-translationally, phosphorylated at Ser-136 by MAPK14/p38-alpha-activated MAPKAPK2/MK2; this phosphorylation is stress-dependent; this phosphorylation decreases its RNA-binding capacity therefore affecting RNA nuclear exosome-mediated degradation. This phosphorylation mediates YWHAE and YWHAZ interactions. As to expression, ubiquitous.

Its subcellular location is the nucleus. It localises to the nucleoplasm. In terms of biological role, RNA-binding subunit of the trimeric nuclear exosome targeting (NEXT) complex, a complex that functions as an RNA exosome cofactor that directs a subset of non-coding short-lived RNAs for exosomal degradation. NEXT is involved in surveillance and turnover of aberrant transcripts and non-coding RNAs. Binds preferentially polyuridine sequences and associates with newly synthesized RNAs, including pre-mRNAs and short-lived exosome substrates such as promoter upstream transcripts (PROMPTs), enhancer RNAs (eRNAs), and 3'-extended products from small nuclear RNAs (snRNAs). Participates in several biological processes including DNA damage response (DDR) and stress response. During stress response, activation of the p38MAPK-MK2 pathway decreases RBM7-RNA-binding and subsequently the RNA exosome degradation activities, thereby modulating the turnover of non-coding transcriptome. Participates in DNA damage response (DDR), through its interaction with MEPCE and LARP7, the core subunits of 7SK snRNP complex, that release the positive transcription elongation factor b (P-TEFb) complex from the 7SK snRNP. In turn, activation of P-TEFb complex induces the transcription of P-TEFb-dependent DDR genes to promote cell viability. The polypeptide is RNA-binding protein 7 (Homo sapiens (Human)).